The sequence spans 255 residues: Acetylglutamate kinase (255 aa).

Residues 40–41 (GG), Arg62, and Asn153 each bind substrate.

This sequence belongs to the acetylglutamate kinase family. ArgB subfamily.

Its subcellular location is the cytoplasm. It carries out the reaction N-acetyl-L-glutamate + ATP = N-acetyl-L-glutamyl 5-phosphate + ADP. It participates in amino-acid biosynthesis; L-arginine biosynthesis; N(2)-acetyl-L-ornithine from L-glutamate: step 2/4. Functionally, catalyzes the ATP-dependent phosphorylation of N-acetyl-L-glutamate. This chain is Acetylglutamate kinase, found in Bacillus thuringiensis (strain Al Hakam).